The sequence spans 238 residues: tRNA (guanine-N(1)-)-methyltransferase (238 aa).

132 to 137 (IGDYVL) provides a ligand contact to S-adenosyl-L-methionine.

The protein belongs to the RNA methyltransferase TrmD family. In terms of assembly, homodimer.

It localises to the cytoplasm. The enzyme catalyses guanosine(37) in tRNA + S-adenosyl-L-methionine = N(1)-methylguanosine(37) in tRNA + S-adenosyl-L-homocysteine + H(+). Specifically methylates guanosine-37 in various tRNAs. This chain is tRNA (guanine-N(1)-)-methyltransferase, found in Nitrobacter hamburgensis (strain DSM 10229 / NCIMB 13809 / X14).